Reading from the N-terminus, the 164-residue chain is Endoribonuclease YbeY (164 aa).

Residues H117, H121, and H127 each coordinate Zn(2+).

Belongs to the endoribonuclease YbeY family. Requires Zn(2+) as cofactor.

It localises to the cytoplasm. Single strand-specific metallo-endoribonuclease involved in late-stage 70S ribosome quality control and in maturation of the 3' terminus of the 16S rRNA. This Mycoplasma capricolum subsp. capricolum (strain California kid / ATCC 27343 / NCTC 10154) protein is Endoribonuclease YbeY.